Here is a 356-residue protein sequence, read N- to C-terminus: Kelch domain-containing protein VC_1773 (356 aa).

Kelch repeat units follow at residues 72–125 (KLYV…SLSP), 163–210 (TIFM…HKNN), 288–331 (NLYA…ASNG), and 333–355 (AMYV…SLLM).

The chain is Kelch domain-containing protein VC_1773 from Vibrio cholerae serotype O1 (strain ATCC 39315 / El Tor Inaba N16961).